We begin with the raw amino-acid sequence, 442 residues long: ATP-dependent protease ATPase subunit HslU (442 aa).

ATP is bound by residues isoleucine 18 and 60 to 65 (GVGKTE). Positions 136-157 (LPKPKNDWESTETDSSSNTRQV) are disordered. 3 residues coordinate ATP: aspartate 255, glutamate 320, and arginine 392.

It belongs to the ClpX chaperone family. HslU subfamily. As to quaternary structure, a double ring-shaped homohexamer of HslV is capped on each side by a ring-shaped HslU homohexamer. The assembly of the HslU/HslV complex is dependent on binding of ATP.

It localises to the cytoplasm. In terms of biological role, ATPase subunit of a proteasome-like degradation complex; this subunit has chaperone activity. The binding of ATP and its subsequent hydrolysis by HslU are essential for unfolding of protein substrates subsequently hydrolyzed by HslV. HslU recognizes the N-terminal part of its protein substrates and unfolds these before they are guided to HslV for hydrolysis. In Shewanella baltica (strain OS185), this protein is ATP-dependent protease ATPase subunit HslU.